A 383-amino-acid polypeptide reads, in one-letter code: N-acetyldiaminopimelate deacetylase (383 aa).

D72 is an active-site residue. The active-site Proton acceptor is the E131.

This sequence belongs to the peptidase M20A family. N-acetyldiaminopimelate deacetylase subfamily.

It catalyses the reaction N-acetyl-(2S,6S)-2,6-diaminopimelate + H2O = (2S,6S)-2,6-diaminopimelate + acetate. The protein operates within amino-acid biosynthesis; L-lysine biosynthesis via DAP pathway; LL-2,6-diaminopimelate from (S)-tetrahydrodipicolinate (acetylase route): step 3/3. Catalyzes the conversion of N-acetyl-diaminopimelate to diaminopimelate and acetate. The polypeptide is N-acetyldiaminopimelate deacetylase (Lacticaseibacillus casei (strain BL23) (Lactobacillus casei)).